The chain runs to 415 residues: Glutamyl-tRNA reductase (415 aa).

Substrate contacts are provided by residues 49 to 52 (TCNR), Ser104, 109 to 111 (EPQ), and Gln115. Cys50 serves as the catalytic Nucleophile. 184-189 (GAGEMI) is a binding site for NADP(+).

It belongs to the glutamyl-tRNA reductase family. Homodimer.

The enzyme catalyses (S)-4-amino-5-oxopentanoate + tRNA(Glu) + NADP(+) = L-glutamyl-tRNA(Glu) + NADPH + H(+). It participates in porphyrin-containing compound metabolism; protoporphyrin-IX biosynthesis; 5-aminolevulinate from L-glutamyl-tRNA(Glu): step 1/2. Functionally, catalyzes the NADPH-dependent reduction of glutamyl-tRNA(Glu) to glutamate 1-semialdehyde (GSA). This Neisseria gonorrhoeae (strain ATCC 700825 / FA 1090) protein is Glutamyl-tRNA reductase.